The primary structure comprises 153 residues: ORM1-like protein 3 (153 aa).

Residues 1 to 17 (MNVGTAHSEVNPNTRVM) form an important for ceramide level-sensing region. The Cytoplasmic portion of the chain corresponds to 1–21 (MNVGTAHSEVNPNTRVMNSRG). Helical transmembrane passes span 22 to 44 (IWLSYVLAIGLLHIVLLSIPFVS) and 45 to 63 (VPVVWTLTNLIHNMGMYIF). The Cytoplasmic portion of the chain corresponds to 64 to 100 (LHTVKGTPFETPDQGKARLLTHWEQMDYGVQFTASRK). The chain crosses the membrane as a helical span at residues 101–117 (FLTITPIVLYFLTSFYT). The Lumenal portion of the chain corresponds to 118 to 121 (KYDQ). The chain crosses the membrane as a helical span at residues 122 to 139 (IHFVLNTVSLMSVLIPKL). Hydroxyproline is present on P137. Residues 140 to 153 (PQLHGVRIFGINKY) lie on the Cytoplasmic side of the membrane.

It belongs to the ORM family. As to quaternary structure, ceramide-sensitive subunit of the serine palmitoyltransferase (SPT) complex, which is also composed of SPTLC1, SPTLC2/3 and SPTSSA/B. When hydroxylated at Pro-137, ubiquitinated via 'Lys-48'-linkage, leading to proteasomal degradation. In endothelial cells, ORMDL3 proteasomal degradation is controlled by the sphingosine 1-phosphate receptor signaling pathway. As to expression, widely expressed. Expressed in adult and fetal heart, brain, lung, liver, skeletal muscle and kidney. Expressed in adult pancreas and placenta and in fetal spleen and thymus.

The protein localises to the endoplasmic reticulum membrane. Functionally, plays an essential role in the homeostatic regulation of sphingolipid de novo biosynthesis by modulating the activity of the serine palmitoyltransferase (SPT) in response to ceramide levels. When complexed to SPT, the binding of ceramides to its N-terminus stabilizes a conformation that block SPT substrate entry, hence preventing SPT catalytic activity. Through this mechanism, maintains ceramide levels at sufficient concentrations for the production of complex sphingolipids, but which prevents the accumulation of ceramides to levels that trigger apoptosis. The protein is ORM1-like protein 3 (ORMDL3) of Homo sapiens (Human).